Here is a 483-residue protein sequence, read N- to C-terminus: Dihydrolipoyllysine-residue acetyltransferase component of pyruvate dehydrogenase complex, mitochondrial (483 aa).

Residues 1 to 28 constitute a mitochondrion transit peptide; that stretch reads MLSANMLRRMHHGVAVTRMLLVSNGKVQ. Positions 53-129 constitute a Lipoyl-binding domain; that stretch reads HTVINMPALS…PVGKPLAVTV (77 aa). K94 is subject to N6-lipoyllysine. 2 disordered regions span residues 143–187 and 234–254; these read IEDS…DRVF and EAAA…APGD. Residues 146–160 show a composition bias toward basic and acidic residues; sequence SSAKEPSAKSGEEKS. The span at 161 to 178 shows a compositional bias: polar residues; that stretch reads APSSEKQSKETSSPSNVS. The Peripheral subunit-binding (PSBD) domain maps to 187-224; the sequence is FASPLARKLAEEKDLDLSQIRGSGPNGRIIKVDIENFK. Residues 235 to 252 are compositionally biased toward low complexity; it reads AAAKATTPAASAADAAAP. Catalysis depends on residues H456 and D460.

Belongs to the 2-oxoacid dehydrogenase family. The cofactor is (R)-lipoate.

The protein resides in the mitochondrion matrix. The catalysed reaction is N(6)-[(R)-dihydrolipoyl]-L-lysyl-[protein] + acetyl-CoA = N(6)-[(R)-S(8)-acetyldihydrolipoyl]-L-lysyl-[protein] + CoA. The pyruvate dehydrogenase complex catalyzes the overall conversion of pyruvate to acetyl-CoA and CO(2). It contains multiple copies of three enzymatic components: pyruvate dehydrogenase (E1), dihydrolipoamide acetyltransferase (E2) and lipoamide dehydrogenase (E3). This Schizosaccharomyces pombe (strain 972 / ATCC 24843) (Fission yeast) protein is Dihydrolipoyllysine-residue acetyltransferase component of pyruvate dehydrogenase complex, mitochondrial.